The sequence spans 192 residues: Interleukin-18 (192 aa).

Positions 1-35 (MAAEPVEDNCISFVEMKFINNTLYFVAENGDLESD) are excised as a propeptide.

This sequence belongs to the IL-1 family. In terms of assembly, forms a ternary complex with ligand-binding receptor subunit IL18R1 and signaling receptor subunit IL18RAP at the plasma membrane. Mature IL18 first binds to IL18R1 forming a low affinity binary complex, which then interacts with IL18RAP to form a high affinity ternary complex that signals inside the cell. Interacts with cargo receptor TMED10; the interaction mediates the translocation from the cytoplasm into the ERGIC (endoplasmic reticulum-Golgi intermediate compartment) and thereby secretion. Post-translationally, the pro-IL-18 precursor is processed by CASP1, CASP4 or CASP5 to yield its mature, active form. The pro-IL-18 precursor features autoinhibitory interactions between the propeptide and the post-cleavage-site region, preventing recognition by the IL18R1 receptor. Processing by CASP1, CASP4 or CASP5 induces conformational changes to generate critical receptor-binding sites. The mature form is then secreted and released in the extracellular milieu by passing through the gasdermin-D (GSDMD) pore. In contrast, cleavage by CASP3 inactivates IL18.

It is found in the cytoplasm. The protein localises to the cytosol. The protein resides in the secreted. Pro-inflammatory cytokine primarily involved in epithelial barrier repair, polarized T-helper 1 (Th1) cell and natural killer (NK) cell immune responses. Upon binding to IL18R1 and IL18RAP, forms a signaling ternary complex which activates NF-kappa-B, triggering synthesis of inflammatory mediators. Synergizes with IL12/interleukin-12 to induce IFNG synthesis from T-helper 1 (Th1) cells and natural killer (NK) cells. Involved in transduction of inflammation downstream of pyroptosis: its mature form is specifically released in the extracellular milieu by passing through the gasdermin-D (GSDMD) pore. The polypeptide is Interleukin-18 (IL18) (Capra hircus (Goat)).